The following is a 242-amino-acid chain: Large ribosomal subunit protein uL30y (242 aa).

It belongs to the universal ribosomal protein uL30 family.

This Arabidopsis thaliana (Mouse-ear cress) protein is Large ribosomal subunit protein uL30y (RPL7B).